The chain runs to 196 residues: Imidazole glycerol phosphate synthase subunit HisH (196 aa).

In terms of domain architecture, Glutamine amidotransferase type-1 spans 2-196 (KVAVIKYNAG…ERIIKNFLEL (195 aa)). Cys-77 acts as the Nucleophile in catalysis. Residues His-178 and Glu-180 contribute to the active site.

In terms of assembly, heterodimer of HisH and HisF.

Its subcellular location is the cytoplasm. The catalysed reaction is 5-[(5-phospho-1-deoxy-D-ribulos-1-ylimino)methylamino]-1-(5-phospho-beta-D-ribosyl)imidazole-4-carboxamide + L-glutamine = D-erythro-1-(imidazol-4-yl)glycerol 3-phosphate + 5-amino-1-(5-phospho-beta-D-ribosyl)imidazole-4-carboxamide + L-glutamate + H(+). The enzyme catalyses L-glutamine + H2O = L-glutamate + NH4(+). Its pathway is amino-acid biosynthesis; L-histidine biosynthesis; L-histidine from 5-phospho-alpha-D-ribose 1-diphosphate: step 5/9. IGPS catalyzes the conversion of PRFAR and glutamine to IGP, AICAR and glutamate. The HisH subunit catalyzes the hydrolysis of glutamine to glutamate and ammonia as part of the synthesis of IGP and AICAR. The resulting ammonia molecule is channeled to the active site of HisF. The polypeptide is Imidazole glycerol phosphate synthase subunit HisH (Bacteroides fragilis (strain YCH46)).